We begin with the raw amino-acid sequence, 242 residues long: Pyridoxine 5'-phosphate synthase (242 aa).

Position 9 (N9) interacts with 3-amino-2-oxopropyl phosphate. 1-deoxy-D-xylulose 5-phosphate is bound at residue 11–12 (DH). R20 is a binding site for 3-amino-2-oxopropyl phosphate. H45 serves as the catalytic Proton acceptor. 1-deoxy-D-xylulose 5-phosphate contacts are provided by R47 and H52. Catalysis depends on E72, which acts as the Proton acceptor. T102 is a 1-deoxy-D-xylulose 5-phosphate binding site. H193 acts as the Proton donor in catalysis. 3-amino-2-oxopropyl phosphate-binding positions include G194 and 215 to 216 (GH).

Belongs to the PNP synthase family. Homooctamer; tetramer of dimers.

The protein resides in the cytoplasm. The enzyme catalyses 3-amino-2-oxopropyl phosphate + 1-deoxy-D-xylulose 5-phosphate = pyridoxine 5'-phosphate + phosphate + 2 H2O + H(+). The protein operates within cofactor biosynthesis; pyridoxine 5'-phosphate biosynthesis; pyridoxine 5'-phosphate from D-erythrose 4-phosphate: step 5/5. Functionally, catalyzes the complicated ring closure reaction between the two acyclic compounds 1-deoxy-D-xylulose-5-phosphate (DXP) and 3-amino-2-oxopropyl phosphate (1-amino-acetone-3-phosphate or AAP) to form pyridoxine 5'-phosphate (PNP) and inorganic phosphate. This is Pyridoxine 5'-phosphate synthase from Idiomarina loihiensis (strain ATCC BAA-735 / DSM 15497 / L2-TR).